An 87-amino-acid polypeptide reads, in one-letter code: U3-theraphotoxin-Hhn1d (87 aa).

The signal sequence occupies residues 1-24 (MVNMKASMFLTFAGLVLLFVVCYA). Positions 25–52 (SESEEKEFPKEMLSSIFAVDNDFKQEER) are excised as a propeptide. Disulfide bonds link Cys54–Cys67, Cys61–Cys72, and Cys66–Cys79.

This sequence belongs to the neurotoxin 10 (Hwtx-1) family. 51 (Hntx-8) subfamily. Hntx-8 sub-subfamily. In terms of tissue distribution, expressed by the venom gland.

Its subcellular location is the secreted. Functionally, ion channel inhibitor. The sequence is that of U3-theraphotoxin-Hhn1d from Cyriopagopus hainanus (Chinese bird spider).